Here is a 551-residue protein sequence, read N- to C-terminus: Cytochrome c lysine N-methyltransferase 1 (551 aa).

The SET domain occupies 46–273 (DKIELLRVSS…PNTEVLITYK (228 aa)). The segment at 184-288 (IELLRQIYSA…LAMITKYGFD (105 aa)) is SET-like.

Belongs to the class V-like SAM-binding methyltransferase superfamily.

It is found in the cytoplasm. Its subcellular location is the cytosol. It carries out the reaction L-lysyl-[cytochrome c] + S-adenosyl-L-methionine = N(6)-methyl-L-lysyl-[cytochrome c] + S-adenosyl-L-homocysteine + H(+). Methyltransferase which mediates trimethylation of cytochrome c (CYC1). In Candida glabrata (strain ATCC 2001 / BCRC 20586 / JCM 3761 / NBRC 0622 / NRRL Y-65 / CBS 138) (Yeast), this protein is Cytochrome c lysine N-methyltransferase 1 (CTM1).